A 333-amino-acid polypeptide reads, in one-letter code: Alpha-N-acetylgalactosaminide alpha-2,6-sialyltransferase 6 (333 aa).

A compositionally biased stretch (polar residues) spans 1-12; sequence MACSRPPSQCEP. Positions 1 to 26 are disordered; sequence MACSRPPSQCEPTSLPPGPPAGRRHL. Over 1–43 the chain is Cytoplasmic; the sequence is MACSRPPSQCEPTSLPPGPPAGRRHLPLSRRRREMSSNKEQRS. Residues 44–64 form a helical; Signal-anchor for type II membrane protein membrane-spanning segment; sequence AVFVILFALITILILYSSNSA. Residues 65–333 are Lumenal-facing; the sequence is NEVFHYGSLR…GITFSHPSWT (269 aa). Asn98 is a glycosylation site (N-linked (GlcNAc...) asparagine). Cys108 and Cys256 are joined by a disulfide.

It belongs to the glycosyltransferase 29 family. As to expression, expressed in kidney, in proximal tubule epithelial cells. Expressed in colon cell lines.

It localises to the golgi apparatus membrane. It catalyses the reaction a ganglioside GM1b (d18:1(4E)) + CMP-N-acetyl-beta-neuraminate = a ganglioside GD1alpha (d18:1(4E)) + CMP + H(+). The enzyme catalyses N-acetyl-alpha-neuraminosyl-(2-&gt;3)-beta-D-galactosyl-(1-&gt;3)-N-acetyl-beta-D-glucosaminyl-(1-&gt;3)-beta-D-galactosyl-(1-&gt;4)-beta-D-glucosyl-(1&lt;-&gt;1')-N-acyl-sphing-4-enine + CMP-N-acetyl-beta-neuraminate = N-acetyl-alpha-neuraminosyl-(2-&gt;3)-beta-D-galactosyl-(1-&gt;3)-[N-acetyl-alpha-neuraminosyl-(2-&gt;6)]-N-acetyl-beta-D-glucosaminyl-(1-&gt;3)-beta-D-galactosyl-(1-&gt;4)-beta-D-glucosyl-(1&lt;-&gt;1')-N-acyl-sphing-4-enine + CMP + H(+). It carries out the reaction a globoside MSGG + CMP-N-acetyl-beta-neuraminate = a globoside DSGG + CMP + H(+). The catalysed reaction is a ganglioside GD1a (d18:1(4E)) + CMP-N-acetyl-beta-neuraminate = a ganglioside GT1aalpha (d18:1(4E)) + CMP + H(+). It catalyses the reaction a ganglioside GT1b (d18:1(4E)) + CMP-N-acetyl-beta-neuraminate = a ganglioside GQ1balpha (d18:1(4E)) + CMP + H(+). The enzyme catalyses 3-O-[alpha-Neu5Ac-(2-&gt;3)-beta-D-Gal-(1-&gt;3)-alpha-D-GalNAc]-L-Ser-[protein] + CMP-N-acetyl-beta-neuraminate = a 3-O-{alpha-Neu5Ac-(2-&gt;3)-beta-D-Gal-(1-&gt;3)-[alpha-Neu5Ac-(2-&gt;6)]-alpha-D-GalNAc}-L-seryl-[protein] + CMP + H(+). It carries out the reaction 3-O-[alpha-Neu5Ac-(2-&gt;3)-beta-D-Gal-(1-&gt;3)-alpha-D-GalNAc]-L-Thr-[protein] + CMP-N-acetyl-beta-neuraminate = a 3-O-{alpha-Neu5Ac-(2-&gt;3)-beta-D-Gal-(1-&gt;3)-[alpha-Neu5Ac-(2-&gt;6)]-alpha-D-GalNAc}-L-threonyl-[protein] + CMP + H(+). Transfers the sialyl group (N-acetyl-alpha-neuraminyl or NeuAc) from CMP-NeuAc onto glycoproteins and glycolipids, forming an alpha-2,6-linkage. Produces branched type disialyl structures by transfer of a sialyl group onto the GalNAc or GlcNAc residue inside backbone core chains having a terminal sialic acid with an alpha-2,3-linkage on Gal. ST6GalNAcVI prefers glycolipids to glycoproteins, predominantly catalyzing the biosynthesis of ganglioside GD1alpha from GM1b. Besides GMb1, MSGG and other glycolipids, it shows activity towards sialyl Lc4Cer generating disialyl Lc4Cer, which can lead to the synthesis of disialyl Lewis a (Le(a)), suggested to be a cancer-associated antigen. Also has activity toward GD1a and GT1b, and can generate DSGG (disialylgalactosylgloboside) from MSGG (monosialylgalactosylgloboside). In Homo sapiens (Human), this protein is Alpha-N-acetylgalactosaminide alpha-2,6-sialyltransferase 6 (ST6GALNAC6).